Here is a 491-residue protein sequence, read N- to C-terminus: Protein nucleotidyltransferase YdiU (491 aa).

Positions 92, 94, 95, 115, 127, 128, 178, and 185 each coordinate ATP. Aspartate 254 (proton acceptor) is an active-site residue. The Mg(2+) site is built by asparagine 255 and aspartate 264. ATP is bound at residue aspartate 264.

This sequence belongs to the SELO family. Mg(2+) serves as cofactor. The cofactor is Mn(2+).

It carries out the reaction L-seryl-[protein] + ATP = 3-O-(5'-adenylyl)-L-seryl-[protein] + diphosphate. It catalyses the reaction L-threonyl-[protein] + ATP = 3-O-(5'-adenylyl)-L-threonyl-[protein] + diphosphate. The enzyme catalyses L-tyrosyl-[protein] + ATP = O-(5'-adenylyl)-L-tyrosyl-[protein] + diphosphate. The catalysed reaction is L-histidyl-[protein] + UTP = N(tele)-(5'-uridylyl)-L-histidyl-[protein] + diphosphate. It carries out the reaction L-seryl-[protein] + UTP = O-(5'-uridylyl)-L-seryl-[protein] + diphosphate. It catalyses the reaction L-tyrosyl-[protein] + UTP = O-(5'-uridylyl)-L-tyrosyl-[protein] + diphosphate. Its function is as follows. Nucleotidyltransferase involved in the post-translational modification of proteins. It can catalyze the addition of adenosine monophosphate (AMP) or uridine monophosphate (UMP) to a protein, resulting in modifications known as AMPylation and UMPylation. This chain is Protein nucleotidyltransferase YdiU, found in Pseudarthrobacter chlorophenolicus (strain ATCC 700700 / DSM 12829 / CIP 107037 / JCM 12360 / KCTC 9906 / NCIMB 13794 / A6) (Arthrobacter chlorophenolicus).